The sequence spans 253 residues: uncharacterized protein (253 aa).

This is an uncharacterized protein from Ostreid herpesvirus 1 (isolate France) (OsHV-1).